An 88-amino-acid chain; its full sequence is Small ribosomal subunit protein bS20 (88 aa).

This sequence belongs to the bacterial ribosomal protein bS20 family.

Binds directly to 16S ribosomal RNA. The polypeptide is Small ribosomal subunit protein bS20 (Bacillus licheniformis (strain ATCC 14580 / DSM 13 / JCM 2505 / CCUG 7422 / NBRC 12200 / NCIMB 9375 / NCTC 10341 / NRRL NRS-1264 / Gibson 46)).